The following is a 25-amino-acid chain: Ocellatin-K1 (25 aa).

Ile-25 carries the isoleucine amide modification.

Expressed by the skin glands.

The protein localises to the secreted. In terms of biological role, has hemolytic and antibacterial activity. The sequence is that of Ocellatin-K1 from Leptodactylus knudseni (Knudsen's thin-toed frog).